A 400-amino-acid polypeptide reads, in one-letter code: tRNA-specific 2-thiouridylase MnmA (400 aa).

ATP contacts are provided by residues 19–26 (AMSGGVDS) and leucine 45. The Nucleophile role is filled by cysteine 113. A disulfide bridge connects residues cysteine 113 and cysteine 210. Glycine 137 is a binding site for ATP. The segment at 160 to 162 (RDQ) is interaction with tRNA. Catalysis depends on cysteine 210, which acts as the Cysteine persulfide intermediate.

This sequence belongs to the MnmA/TRMU family.

The protein localises to the cytoplasm. It carries out the reaction S-sulfanyl-L-cysteinyl-[protein] + uridine(34) in tRNA + AH2 + ATP = 2-thiouridine(34) in tRNA + L-cysteinyl-[protein] + A + AMP + diphosphate + H(+). Its function is as follows. Catalyzes the 2-thiolation of uridine at the wobble position (U34) of tRNA, leading to the formation of s(2)U34. The protein is tRNA-specific 2-thiouridylase MnmA of Nitrobacter winogradskyi (strain ATCC 25391 / DSM 10237 / CIP 104748 / NCIMB 11846 / Nb-255).